We begin with the raw amino-acid sequence, 584 residues long: Extracellular serine/threonine protein kinase FAM20C (584 aa).

Residues 1–10 are Cytoplasmic-facing; sequence MKMMLVRRFR. A propeptide spanning residues 1–92 is cleaved from the precursor; the sequence is MKMMLVRRFR…PNKHTLRILQ (92 aa). Residues 11–31 form a helical; Signal-anchor for type II membrane protein membrane-spanning segment; that stretch reads VLILMVFLVACALHIALDLLP. Topologically, residues 32 to 584 are lumenal; that stretch reads RLERRGARPS…DTEHRAASAR (553 aa). Disordered stretches follow at residues 62-81 and 94-159; these read QVRGRPGEPPAASSAAGDAG and FSSD…GDAS. Composition is skewed to low complexity over residues 71 to 81 and 95 to 112; these read PAASSAAGDAG and SSDPSSNLSSHSLEKLPP. Asn101 carries N-linked (GlcNAc...) asparagine glycosylation. Ser106 is modified (phosphoserine). Residues 116-149 show a composition bias toward basic and acidic residues; sequence PAERALRGRDPGALRPHDPAHRPLLRDPGPRRSE. The ATP site is built by Gln269, Lys285, and Glu306. Glu306 is a Mn(2+) binding site. Residue Asn335 is glycosylated (N-linked (GlcNAc...) asparagine). The tract at residues 354-565 is kinase domain; that stretch reads FISPANNICF…AVRDCVERNG (212 aa). 2 disulfide bridges follow: Cys362-Cys378 and Cys367-Cys371. 389-392 serves as a coordination point for ATP; it reads AAFL. 2 disulfide bridges follow: Cys426/Cys500 and Cys501/Cys560. Asp458 is an active-site residue. Residue Glu463 coordinates ATP. Asn470 carries N-linked (GlcNAc...) asparagine glycosylation. Asp478 is an ATP binding site. Asp478 is a Mn(2+) binding site.

This sequence belongs to the FAM20 family. As to quaternary structure, homodimer; disulfide-linked. Interacts with FAM20A; probably forming a heterotetramer of 2 subunits of FAM20A and 2 subunits of FAM20C. Interacts with protease MBTPS1/S1P; the interaction results in FAM20C cleavage and secretion. Interacts with COPII components SEC23A and SEC24A; transport of FAM20C from the endoplasmic reticulum to the Golgi is likely to be mediated by COPII vesicles. Mn(2+) serves as cofactor. Post-translationally, N-glycosylation is required for folding. Autophosphorylated. In terms of processing, propeptide cleavage by MBTPS1/S1P promotes FAM20C secretion and maximal kinase activity which is essential for efficient osteoblast differentiation and biomineralization. As to expression, widely expressed.

It localises to the golgi apparatus membrane. The protein resides in the secreted. Its subcellular location is the endoplasmic reticulum. It catalyses the reaction L-seryl-[protein] + ATP = O-phospho-L-seryl-[protein] + ADP + H(+). The enzyme catalyses L-threonyl-[protein] + ATP = O-phospho-L-threonyl-[protein] + ADP + H(+). Serine/threonine protein kinase activity is increased upon interaction with FAM20A. Golgi serine/threonine protein kinase that phosphorylates secretory pathway proteins within Ser-x-Glu/pSer motifs and plays a key role in biomineralization of bones and teeth. Constitutes the main protein kinase for extracellular proteins, generating the majority of the extracellular phosphoproteome. Mainly phosphorylates proteins within the Ser-x-Glu/pSer motif, but also displays a broader substrate specificity. Phosphorylates ERO1A, enhancing its activity which is required to maintain endoplasmic reticulum redox homeostasis and for oxidative protein folding. During endoplasmic reticulum stress, phosphorylates P4HB/PDIA1 which induces a functional switch, causing P4HB to change from an oxidoreductase to a molecular chaperone. This is critical to maintain ER proteostasis and reduce cell death under ER stress. Phosphorylation of P4HB also promotes its interaction with ERN1, leading to reduced activity of ERN1, a key sensor for the endoplasmic reticulum unfolded protein response. Required for osteoblast differentiation and mineralization. Phosphorylates casein as well as a number of proteins involved in biomineralization such as AMELX, AMTN, ENAM and SPP1/OPN. In addition to its role in biomineralization, also plays a role in lipid homeostasis, wound healing and cell migration and adhesion. The protein is Extracellular serine/threonine protein kinase FAM20C of Homo sapiens (Human).